We begin with the raw amino-acid sequence, 296 residues long: Protoheme IX farnesyltransferase (296 aa).

Helical transmembrane passes span leucine 29–alanine 49, alanine 54–methionine 74, phenylalanine 98–valine 118, proline 121–methionine 141, leucine 147–alanine 167, glycine 175–isoleucine 195, tryptophan 221–valine 241, tyrosine 246–glycine 266, and asparagine 275–alanine 295.

It belongs to the UbiA prenyltransferase family. Protoheme IX farnesyltransferase subfamily.

The protein localises to the cell inner membrane. The catalysed reaction is heme b + (2E,6E)-farnesyl diphosphate + H2O = Fe(II)-heme o + diphosphate. It participates in porphyrin-containing compound metabolism; heme O biosynthesis; heme O from protoheme: step 1/1. In terms of biological role, converts heme B (protoheme IX) to heme O by substitution of the vinyl group on carbon 2 of heme B porphyrin ring with a hydroxyethyl farnesyl side group. The sequence is that of Protoheme IX farnesyltransferase from Anaeromyxobacter sp. (strain Fw109-5).